The primary structure comprises 495 residues: MFLQIAACFTVIGLLYGLVSNLQQNRRLAASLPPGPPGHWLFGNVPPKNFPFIRFAELTEIYGPVFTLRFGRRIVCVVGRHQAAVDILVKHSAETTDRPRAIAASEMLSQGFRILMTPAGERLKKYRRAFHTCLQPSAAATYKPIQYNHAKNYILDCLHDGKCHLEHGRRYAASVVMYIGYGKTTPTSYSDPEVQEVNKCLGRLSEVIKPGAYLVDTYPILKHIPGYASHLWRYGREELALYTRQANAVRKQLEKDEAQPSFAAYLIENQERLGLSNDELAYLSGAIFGAGSDTTAAAIAVMTMAAACYPETQARVQAQLDEVVGSDRAPTFEDEEMLPEVTAFVLEVYRWRPVSAGGVPHRSTKDIVWNGYVIPKGTEIIGNLWAIGRDPELFPDAEEFRPQRWLNENGRIRDDLKYPVFGFGRRVCVGQHVADQSLFINTALALWAFKISQDPAKPIDVLAFTDTANIRPLPFTLRFEPRVKDIEAVLEAHLD.

The helical transmembrane segment at 2–22 threads the bilayer; that stretch reads FLQIAACFTVIGLLYGLVSNL. A heme-binding site is contributed by C428.

The protein belongs to the cytochrome P450 family. It depends on heme as a cofactor.

It is found in the membrane. The protein operates within secondary metabolite biosynthesis. In terms of biological role, cytochrome P450 monooxygenase that is able to use 4-ethoxybenzoic acid as a substrate for oxidation. This Postia placenta (strain ATCC 44394 / Madison 698-R) (Brown rot fungus) protein is Cytochrome P450 monooxygenase 113.